The primary structure comprises 197 residues: ATP-dependent Clp protease proteolytic subunit 1 (197 aa).

Catalysis depends on Ser-96, which acts as the Nucleophile. Residue His-121 is part of the active site.

The protein belongs to the peptidase S14 family. As to quaternary structure, fourteen ClpP subunits assemble into 2 heptameric rings which stack back to back to give a disk-like structure with a central cavity, resembling the structure of eukaryotic proteasomes.

It is found in the cytoplasm. The enzyme catalyses Hydrolysis of proteins to small peptides in the presence of ATP and magnesium. alpha-casein is the usual test substrate. In the absence of ATP, only oligopeptides shorter than five residues are hydrolyzed (such as succinyl-Leu-Tyr-|-NHMec, and Leu-Tyr-Leu-|-Tyr-Trp, in which cleavage of the -Tyr-|-Leu- and -Tyr-|-Trp bonds also occurs).. In terms of biological role, cleaves peptides in various proteins in a process that requires ATP hydrolysis. Has a chymotrypsin-like activity. Plays a major role in the degradation of misfolded proteins. The protein is ATP-dependent Clp protease proteolytic subunit 1 of Synechococcus sp. (strain CC9902).